The chain runs to 89 residues: Small ribosomal subunit protein bS20 (89 aa).

The segment at 1 to 26 is disordered; the sequence is MANIKASKKDALTSEKRRKKNSSRRS. Over residues 16 to 26 the composition is skewed to basic residues; sequence KRRKKNSSRRS.

Belongs to the bacterial ribosomal protein bS20 family.

Functionally, binds directly to 16S ribosomal RNA. In Buchnera aphidicola subsp. Acyrthosiphon pisum (strain 5A), this protein is Small ribosomal subunit protein bS20.